A 1663-amino-acid chain; its full sequence is Cortactin-binding protein 2 (1663 aa).

5 disordered regions span residues M1 to A23, K203 to E222, G367 to G440, G454 to S478, and R498 to S616. The stretch at K119–K276 forms a coiled coil. The span at P386 to S396 shows a compositional bias: low complexity. Asymmetric dimethylarginine is present on R498. The span at T583–Q593 shows a compositional bias: polar residues. ANK repeat units lie at residues G709 to Y739, D743 to A772, N776 to H805, G809 to V838, D842 to G871, and E912 to R942. Residues K1449–E1482 form a disordered region. Phosphoserine is present on S1524. Residues Q1581–K1663 form a disordered region. Residues K1582 to K1599 show a composition bias toward polar residues. Residues S1624 to Q1638 are compositionally biased toward low complexity. The segment covering I1639–V1648 has biased composition (polar residues). Positions H1653 to K1663 are enriched in basic and acidic residues.

In terms of assembly, interacts with CTTN/cortactin SH3 domain. Interacts with STRN, STRN4/zinedin and MOB4/phocein; this interactions mediate the association with the STRIPAK core complex and may regulate dendritic spine distribution of the STRIPAK complex in hippocampal neurons. Activation of glutamate receptors weakens the interaction with STRN and STRN4. Highest expression in brain. Also expressed in kidney, pancreas, lung, heart, liver, skeletal muscle and placenta.

It localises to the cytoplasm. The protein localises to the cell cortex. The protein resides in the cell projection. It is found in the dendritic spine. Its function is as follows. Regulates the dendritic spine distribution of CTTN/cortactin in hippocampal neurons, and thus controls dendritic spinogenesis and dendritic spine maintenance. Associates with the striatin-interacting phosphatase and kinase (STRIPAK) core complex to regulate dendritic spine distribution of the STRIPAK complex in hippocampal neurons. In Homo sapiens (Human), this protein is Cortactin-binding protein 2.